The following is a 469-amino-acid chain: 3-isopropylmalate dehydratase large subunit (469 aa).

3 residues coordinate [4Fe-4S] cluster: Cys-347, Cys-410, and Cys-413.

It belongs to the aconitase/IPM isomerase family. LeuC type 1 subfamily. As to quaternary structure, heterodimer of LeuC and LeuD. [4Fe-4S] cluster is required as a cofactor.

The enzyme catalyses (2R,3S)-3-isopropylmalate = (2S)-2-isopropylmalate. The protein operates within amino-acid biosynthesis; L-leucine biosynthesis; L-leucine from 3-methyl-2-oxobutanoate: step 2/4. In terms of biological role, catalyzes the isomerization between 2-isopropylmalate and 3-isopropylmalate, via the formation of 2-isopropylmaleate. This is 3-isopropylmalate dehydratase large subunit from Cupriavidus pinatubonensis (strain JMP 134 / LMG 1197) (Cupriavidus necator (strain JMP 134)).